The sequence spans 445 residues: tRNA(Ile)-lysidine synthase (445 aa).

Position 33–38 (33–38) interacts with ATP; that stretch reads SGGLDS.

Belongs to the tRNA(Ile)-lysidine synthase family.

It is found in the cytoplasm. It carries out the reaction cytidine(34) in tRNA(Ile2) + L-lysine + ATP = lysidine(34) in tRNA(Ile2) + AMP + diphosphate + H(+). Ligates lysine onto the cytidine present at position 34 of the AUA codon-specific tRNA(Ile) that contains the anticodon CAU, in an ATP-dependent manner. Cytidine is converted to lysidine, thus changing the amino acid specificity of the tRNA from methionine to isoleucine. This Pseudomonas syringae pv. tomato (strain ATCC BAA-871 / DC3000) protein is tRNA(Ile)-lysidine synthase.